A 31-amino-acid polypeptide reads, in one-letter code: MLTITSYFGFLLAVLTITSALFIGLNKIRLI.

Residues Ile-4–Gly-24 form a helical membrane-spanning segment.

Belongs to the PetL family. In terms of assembly, the 4 large subunits of the cytochrome b6-f complex are cytochrome b6, subunit IV (17 kDa polypeptide, PetD), cytochrome f and the Rieske protein, while the 4 small subunits are PetG, PetL, PetM and PetN. The complex functions as a dimer.

Its subcellular location is the plastid. It is found in the chloroplast thylakoid membrane. Component of the cytochrome b6-f complex, which mediates electron transfer between photosystem II (PSII) and photosystem I (PSI), cyclic electron flow around PSI, and state transitions. PetL is important for photoautotrophic growth as well as for electron transfer efficiency and stability of the cytochrome b6-f complex. The protein is Cytochrome b6-f complex subunit 6 of Cucumis sativus (Cucumber).